Reading from the N-terminus, the 231-residue chain is 7-cyano-7-deazaguanine synthase (231 aa).

8–18 contacts ATP; it reads FSGGQDSTTCL. Positions 187, 196, 199, and 202 each coordinate Zn(2+).

It belongs to the QueC family. It depends on Zn(2+) as a cofactor.

The catalysed reaction is 7-carboxy-7-deazaguanine + NH4(+) + ATP = 7-cyano-7-deazaguanine + ADP + phosphate + H2O + H(+). It participates in purine metabolism; 7-cyano-7-deazaguanine biosynthesis. Catalyzes the ATP-dependent conversion of 7-carboxy-7-deazaguanine (CDG) to 7-cyano-7-deazaguanine (preQ(0)). The sequence is that of 7-cyano-7-deazaguanine synthase from Vibrio cholerae serotype O1 (strain ATCC 39541 / Classical Ogawa 395 / O395).